The sequence spans 159 residues: Phosphopantetheine adenylyltransferase (159 aa).

Position 10 (Thr-10) interacts with substrate. ATP-binding positions include 10 to 11 and His-18; that span reads TF. Substrate-binding residues include Lys-42, Leu-74, and Arg-88. Residues 89-91, Glu-99, and 124-130 each bind ATP; these read GLR and YAFISSS.

The protein belongs to the bacterial CoaD family. Homohexamer. Requires Mg(2+) as cofactor.

The protein resides in the cytoplasm. The enzyme catalyses (R)-4'-phosphopantetheine + ATP + H(+) = 3'-dephospho-CoA + diphosphate. Its pathway is cofactor biosynthesis; coenzyme A biosynthesis; CoA from (R)-pantothenate: step 4/5. Reversibly transfers an adenylyl group from ATP to 4'-phosphopantetheine, yielding dephospho-CoA (dPCoA) and pyrophosphate. This Hydrogenovibrio crunogenus (strain DSM 25203 / XCL-2) (Thiomicrospira crunogena) protein is Phosphopantetheine adenylyltransferase.